Here is a 453-residue protein sequence, read N- to C-terminus: GTPase Der (453 aa).

EngA-type G domains follow at residues 3–167 and 187–360; these read PIIV…ISEK and IKVA…EDSK. Residues 9-16, 57-61, 119-122, 193-200, 240-244, and 305-308 contribute to the GTP site; these read GRTNVGKS, DTAGL, NKID, GRPNVGKS, DTAGA, and NKCD. A KH-like domain is found at 361–445; the sequence is RKISTSTLIK…PIQIQFKDNE (85 aa).

This sequence belongs to the TRAFAC class TrmE-Era-EngA-EngB-Septin-like GTPase superfamily. EngA (Der) GTPase family. As to quaternary structure, associates with the 50S ribosomal subunit.

GTPase that plays an essential role in the late steps of ribosome biogenesis. This chain is GTPase Der, found in Buchnera aphidicola subsp. Acyrthosiphon pisum (strain 5A).